Consider the following 187-residue polypeptide: Elongation factor P (187 aa).

This sequence belongs to the elongation factor P family.

The protein resides in the cytoplasm. Its pathway is protein biosynthesis; polypeptide chain elongation. Its function is as follows. Involved in peptide bond synthesis. Stimulates efficient translation and peptide-bond synthesis on native or reconstituted 70S ribosomes in vitro. Probably functions indirectly by altering the affinity of the ribosome for aminoacyl-tRNA, thus increasing their reactivity as acceptors for peptidyl transferase. In Corynebacterium urealyticum (strain ATCC 43042 / DSM 7109), this protein is Elongation factor P.